Reading from the N-terminus, the 196-residue chain is MIEQSLDNLILASSSERRVALLKQINIKPGLVLPADIDESPLKKELPKDYSIRMAKSKAEKIQSANPNYFVLGVDTVVACGRRILLKAENVEQAEKCVRLLSGRRHRVYTSVCLLIPDQSKQHIRTVVTIVKFKRLSEQEIKYYLASEEWKNRAGGCNIQGLAGMFVLFLRGSYSSVIGLPLHETNCLLSNYFNLY.

The active-site Proton acceptor is the Asp75.

It belongs to the Maf family. YhdE subfamily. A divalent metal cation serves as cofactor.

Its subcellular location is the cytoplasm. It carries out the reaction dTTP + H2O = dTMP + diphosphate + H(+). It catalyses the reaction UTP + H2O = UMP + diphosphate + H(+). Functionally, nucleoside triphosphate pyrophosphatase that hydrolyzes dTTP and UTP. May have a dual role in cell division arrest and in preventing the incorporation of modified nucleotides into cellular nucleic acids. The sequence is that of dTTP/UTP pyrophosphatase from Wolbachia pipientis subsp. Culex pipiens (strain wPip).